A 312-amino-acid polypeptide reads, in one-letter code: Small kinetochore-associated protein (312 aa).

Positions Met1 to Glu171 are disordered. A compositionally biased stretch (basic and acidic residues) spans Asp131–Gly143. The interval Leu156–Met312 is interaction with SPAG5. Coiled coils occupy residues Gln166–Phe210 and Leu246–Glu287.

Part of an astrin (SPAG5)-kinastrin (SKAP) complex containing KNSTRN, SPAG5, PLK1, DYNLL1 and SGO2A. Interacts with SPAG5. Directly binds to microtubules, although at relatively low affinity. Interacts with CENPE; this interaction greatly favors microtubule-binding. Interacts with DSN1/MIS13; leading to localization to kinetochores. Interacts with MAPRE1/EB1; leading to localization to the microtubule plus ends. Interacts with PRPF19. Interacts with DYNLL1. Interacts with MAP4.

Its subcellular location is the nucleus. The protein resides in the chromosome. It localises to the centromere. The protein localises to the kinetochore. It is found in the cytoplasm. Its subcellular location is the cytoskeleton. The protein resides in the spindle pole. It localises to the microtubule organizing center. Essential component of the mitotic spindle required for faithful chromosome segregation and progression into anaphase. Promotes the metaphase-to-anaphase transition and is required for chromosome alignment, normal timing of sister chromatid segregation, and maintenance of spindle pole architecture. The astrin (SPAG5)-kinastrin (SKAP) complex promotes stable microtubule-kinetochore attachments. Required for kinetochore oscillations and dynamics of microtubule plus-ends during live cell mitosis, possibly by forming a link between spindle microtubule plus-ends and mitotic chromosomes to achieve faithful cell division. The protein is Small kinetochore-associated protein (Knstrn) of Mus musculus (Mouse).